Here is a 796-residue protein sequence, read N- to C-terminus: N-terminal acetyltransferase B complex subunit MDM20 (796 aa).

At serine 2 the chain carries N-acetylserine.

It belongs to the MDM20/NAA25 family. As to quaternary structure, component of the N-terminal acetyltransferase B (NatB) complex, which is composed of NAT3 and MDM20.

The protein localises to the cytoplasm. Non-catalytic subunit of the NatB N-terminal acetyltransferase, which catalyzes acetylation of the amino-terminal methionine residues of all proteins beginning with Met-Asp or Met-Glu and of some proteins beginning with Met-Asn or Met-Met. NatB acetylates TPM1 protein and regulates tropomyocin-actin interactions. MDM20 is required for mitochondrial inheritance during budding and together with TPM1, is essential for the integrity and assembly of actin cables. Genetically interacts with CIN8. This chain is N-terminal acetyltransferase B complex subunit MDM20 (MDM20), found in Saccharomyces cerevisiae (strain ATCC 204508 / S288c) (Baker's yeast).